Consider the following 324-residue polypeptide: Anthranilate phosphoribosyltransferase (324 aa).

Residues glycine 72, 75 to 76 (GD), serine 80, 82 to 85 (NVST), 99 to 107 (KHGNVSITS), and serine 111 each bind 5-phospho-alpha-D-ribose 1-diphosphate. Glycine 72 lines the anthranilate pocket. Position 84 (serine 84) interacts with Mg(2+). Position 102 (asparagine 102) interacts with anthranilate. Arginine 157 serves as a coordination point for anthranilate. Mg(2+) is bound by residues aspartate 215 and glutamate 216.

This sequence belongs to the anthranilate phosphoribosyltransferase family. In terms of assembly, homodimer. Requires Mg(2+) as cofactor.

The enzyme catalyses N-(5-phospho-beta-D-ribosyl)anthranilate + diphosphate = 5-phospho-alpha-D-ribose 1-diphosphate + anthranilate. Its pathway is amino-acid biosynthesis; L-tryptophan biosynthesis; L-tryptophan from chorismate: step 2/5. Catalyzes the transfer of the phosphoribosyl group of 5-phosphorylribose-1-pyrophosphate (PRPP) to anthranilate to yield N-(5'-phosphoribosyl)-anthranilate (PRA). This Pyrococcus abyssi (strain GE5 / Orsay) protein is Anthranilate phosphoribosyltransferase.